The primary structure comprises 316 residues: Phospholipase A1 3 (316 aa).

An N-terminal signal peptide occupies residues 1–4; that stretch reads ADDL. Positions 5 to 14 are excised as a propeptide; that stretch reads TTLRNGTLDR. A disulfide bond links Cys-20 and Cys-103. Ser-153 acts as the Nucleophile in catalysis. Asp-181 functions as the Charge relay system in the catalytic mechanism. Cystine bridges form between Cys-192-Cys-197 and Cys-235-Cys-240. The active-site Charge relay system is the His-242. 3 disulfide bridges follow: Cys-257–Cys-284, Cys-258–Cys-309, and Cys-277–Cys-282.

Belongs to the AB hydrolase superfamily. Lipase family. As to expression, expressed by the venom gland.

It localises to the secreted. The enzyme catalyses a 1,2-diacyl-sn-glycero-3-phosphocholine + H2O = a 2-acyl-sn-glycero-3-phosphocholine + a fatty acid + H(+). Functionally, catalyzes the hydrolysis of phosphatidylcholine with phospholipase A1 activity. May act as an allergen and induce hemolytic activity. This is Phospholipase A1 3 from Polistes dominula (European paper wasp).